Reading from the N-terminus, the 565-residue chain is Sulfite reductase [NADPH] hemoprotein beta-component (565 aa).

The [4Fe-4S] cluster site is built by Cys-429, Cys-435, Cys-474, and Cys-478. Siroheme is bound at residue Cys-478.

The protein belongs to the nitrite and sulfite reductase 4Fe-4S domain family. In terms of assembly, alpha(8)-beta(8). The alpha component is a flavoprotein, the beta component is a hemoprotein. Siroheme serves as cofactor. The cofactor is [4Fe-4S] cluster.

It catalyses the reaction hydrogen sulfide + 3 NADP(+) + 3 H2O = sulfite + 3 NADPH + 4 H(+). It functions in the pathway sulfur metabolism; hydrogen sulfide biosynthesis; hydrogen sulfide from sulfite (NADPH route): step 1/1. Its function is as follows. Component of the sulfite reductase complex that catalyzes the 6-electron reduction of sulfite to sulfide. This is one of several activities required for the biosynthesis of L-cysteine from sulfate. In Shewanella pealeana (strain ATCC 700345 / ANG-SQ1), this protein is Sulfite reductase [NADPH] hemoprotein beta-component.